An 880-amino-acid chain; its full sequence is DNA mismatch repair protein MutS (880 aa).

624–631 (GPNMAGKS) is a binding site for ATP.

The protein belongs to the DNA mismatch repair MutS family.

This protein is involved in the repair of mismatches in DNA. It is possible that it carries out the mismatch recognition step. This protein has a weak ATPase activity. In Alkaliphilus metalliredigens (strain QYMF), this protein is DNA mismatch repair protein MutS.